We begin with the raw amino-acid sequence, 1888 residues long: Fatty acid synthase subunit alpha (1888 aa).

The segment at 98-118 (DLAPVEEPNAEEQTGAAATPA) is disordered. One can recognise a Carrier domain in the interval 146–221 (VKASLLLHVL…ETFQDTFAGS (76 aa)). Residue Ser-181 is modified to O-(pantetheine 4'-phosphoryl)serine. The segment at 675 to 874 (DKYVLITGAG…CGAIIGWTRG (200 aa)) is beta-ketoacyl reductase. Residues 1119–1657 (KQMIQEVVIE…QKGAQAVAVH (539 aa)) form the Ketosynthase family 3 (KS3) domain. Residues Cys-1305, His-1542, and His-1583 each act as for beta-ketoacyl synthase activity in the active site. Mg(2+)-binding residues include Asp-1774, Val-1775, and Glu-1776. Acetyl-CoA is bound by residues 1774-1776 (DVE), Tyr-1800, Ser-1810, 1819-1829 (EAVFKSLGVKS), 1843-1846 (REAG), and 1873-1875 (ISH). The Mg(2+) site is built by Ser-1874 and His-1875.

It belongs to the thiolase-like superfamily. Fungal fatty acid synthetase subunit alpha family. As to quaternary structure, fatty acid synthase is composed of alpha and beta subunits.

It catalyses the reaction acetyl-CoA + n malonyl-CoA + 2n NADPH + 4n H(+) = a long-chain-acyl-CoA + n CoA + n CO2 + 2n NADP(+).. It carries out the reaction a fatty acyl-[ACP] + malonyl-[ACP] + H(+) = a 3-oxoacyl-[ACP] + holo-[ACP] + CO2. The catalysed reaction is a (3R)-hydroxyacyl-[ACP] + NADP(+) = a 3-oxoacyl-[ACP] + NADPH + H(+). In terms of biological role, fatty acid synthetase catalyzes the formation of long-chain fatty acids from acetyl-CoA, malonyl-CoA and NADPH. The alpha subunit contains domains for: acyl carrier protein, 3-oxoacyl-[acyl-carrier-protein] reductase, and 3-oxoacyl-[acyl-carrier-protein] synthase. In this species, higher amounts of C18 than C16 fatty acids are produced. The protein is Fatty acid synthase subunit alpha (FAS2) of Lachancea kluyveri (Yeast).